We begin with the raw amino-acid sequence, 229 residues long: Flagellar L-ring protein (229 aa).

An N-terminal signal peptide occupies residues 1 to 25 (MKQVRLLPSAAVRAACALAAAALAG). A lipid anchor (N-palmitoyl cysteine) is attached at C26. A lipid anchor (S-diacylglycerol cysteine) is attached at C26.

Belongs to the FlgH family. As to quaternary structure, the basal body constitutes a major portion of the flagellar organelle and consists of four rings (L,P,S, and M) mounted on a central rod.

It is found in the cell outer membrane. The protein resides in the bacterial flagellum basal body. Its function is as follows. Assembles around the rod to form the L-ring and probably protects the motor/basal body from shearing forces during rotation. This chain is Flagellar L-ring protein, found in Burkholderia multivorans (strain ATCC 17616 / 249).